A 402-amino-acid polypeptide reads, in one-letter code: Pentalenic acid synthase (402 aa).

The interval 1–28 (MTEPGTSVSAPVAFPQDRTCPYDPPTAY) is disordered. Position 351 (Cys351) interacts with heme.

The protein belongs to the cytochrome P450 family. Heme serves as cofactor.

It catalyses the reaction 1-deoxypentalenate + reduced 2[4Fe-4S]-[ferredoxin] + O2 + 2 H(+) = pentalenate + oxidized 2[4Fe-4S]-[ferredoxin] + H2O. It functions in the pathway antibiotic biosynthesis; neopentalenolactone biosynthesis. Its function is as follows. Catalyzes the conversion of 1-deoxypentalenic acid to pentalenic acid in the biosynthesis of neopentalenolactone antibiotic. This Streptomyces avermitilis (strain ATCC 31267 / DSM 46492 / JCM 5070 / NBRC 14893 / NCIMB 12804 / NRRL 8165 / MA-4680) protein is Pentalenic acid synthase (cyp28).